Here is a 523-residue protein sequence, read N- to C-terminus: ATP synthase subunit alpha (523 aa).

173 to 180 is an ATP binding site; sequence GDRQTGKT.

The protein belongs to the ATPase alpha/beta chains family. As to quaternary structure, F-type ATPases have 2 components, CF(1) - the catalytic core - and CF(0) - the membrane proton channel. CF(1) has five subunits: alpha(3), beta(3), gamma(1), delta(1), epsilon(1). CF(0) has three main subunits: a(1), b(2) and c(9-12). The alpha and beta chains form an alternating ring which encloses part of the gamma chain. CF(1) is attached to CF(0) by a central stalk formed by the gamma and epsilon chains, while a peripheral stalk is formed by the delta and b chains.

The protein localises to the cell membrane. It catalyses the reaction ATP + H2O + 4 H(+)(in) = ADP + phosphate + 5 H(+)(out). Produces ATP from ADP in the presence of a proton gradient across the membrane. The alpha chain is a regulatory subunit. The sequence is that of ATP synthase subunit alpha from Streptomyces griseus subsp. griseus (strain JCM 4626 / CBS 651.72 / NBRC 13350 / KCC S-0626 / ISP 5235).